We begin with the raw amino-acid sequence, 96 residues long: Co-chaperonin GroES (96 aa).

This sequence belongs to the GroES chaperonin family. Heptamer of 7 subunits arranged in a ring. Interacts with the chaperonin GroEL.

The protein localises to the cytoplasm. Together with the chaperonin GroEL, plays an essential role in assisting protein folding. The GroEL-GroES system forms a nano-cage that allows encapsulation of the non-native substrate proteins and provides a physical environment optimized to promote and accelerate protein folding. GroES binds to the apical surface of the GroEL ring, thereby capping the opening of the GroEL channel. The protein is Co-chaperonin GroES of Acinetobacter baumannii (strain AB307-0294).